Here is a 345-residue protein sequence, read N- to C-terminus: tRNA N6-adenosine threonylcarbamoyltransferase (345 aa).

Residues histidine 111 and histidine 115 each contribute to the Fe cation site. Substrate-binding positions include 134–138 (LVSGG), aspartate 167, glycine 180, and asparagine 277. Aspartate 305 contacts Fe cation.

The protein belongs to the KAE1 / TsaD family. Requires Fe(2+) as cofactor.

Its subcellular location is the cytoplasm. It carries out the reaction L-threonylcarbamoyladenylate + adenosine(37) in tRNA = N(6)-L-threonylcarbamoyladenosine(37) in tRNA + AMP + H(+). In terms of biological role, required for the formation of a threonylcarbamoyl group on adenosine at position 37 (t(6)A37) in tRNAs that read codons beginning with adenine. Is involved in the transfer of the threonylcarbamoyl moiety of threonylcarbamoyl-AMP (TC-AMP) to the N6 group of A37, together with TsaE and TsaB. TsaD likely plays a direct catalytic role in this reaction. The protein is tRNA N6-adenosine threonylcarbamoyltransferase of Laribacter hongkongensis (strain HLHK9).